Here is a 149-residue protein sequence, read N- to C-terminus: Large ribosomal subunit protein bL9 (149 aa).

It belongs to the bacterial ribosomal protein bL9 family.

Functionally, binds to the 23S rRNA. The protein is Large ribosomal subunit protein bL9 of Dichelobacter nodosus (strain VCS1703A).